Here is a 342-residue protein sequence, read N- to C-terminus: Trace amine-associated receptor 3 (342 aa).

The Extracellular segment spans residues 1 to 35; the sequence is MDLIYIPEDLSSCPKFGNKSCPPTNRSFRVRLIMY. 2 N-linked (GlcNAc...) asparagine glycosylation sites follow: Asn-18 and Asn-25. 2 disulfides stabilise this stretch: Cys-21-Cys-185 and Cys-104-Cys-189. The chain crosses the membrane as a helical span at residues 36–56; the sequence is LLMTGAMVITIFGNLVIIISI. The Cytoplasmic portion of the chain corresponds to 57–68; the sequence is SHFKQLHSPTNF. The chain crosses the membrane as a helical span at residues 69–89; sequence LILSMATTDFLLGFVIMPYSM. The Extracellular segment spans residues 90 to 150; it reads VRSVESCWYF…TTMTASMIKR (61 aa). Residues 151-168 traverse the membrane as a helical segment; that stretch reads LLFFCWAAPALFSFGLVL. Topologically, residues 169 to 172 are cytoplasmic; that stretch reads SEAN. The tract at residues 173–186 is extracellular Loop 2 (ECL2); that stretch reads VSGMQSYEILIACF. A helical membrane pass occupies residues 173–193; it reads VSGMQSYEILIACFNFCALTF. Topologically, residues 194-198 are extracellular; it reads NKFWG. The chain crosses the membrane as a helical span at residues 199–223; the sequence is TILFTTCFFTPGSIMVGIYGKIFIV. At 224 to 256 the chain is on the cytoplasmic side; it reads SRRHARALGNMPENTKGAGRNLSKKKDRKAAKT. The helical transmembrane segment at 257 to 277 threads the bilayer; sequence LGIVMGVFLACWLPCFLAVLI. Residues 278–286 are Extracellular-facing; that stretch reads DPYLDYSTP. Residues 287 to 307 traverse the membrane as a helical segment; it reads IIVLDLLVWLGYFNSTCNPLI. Over 308-342 the chain is Cytoplasmic; sequence HGFFYPWFRKALEHIVSGKIFRSNSDTANLFPEAH.

This sequence belongs to the G-protein coupled receptor 1 family.

The protein resides in the cell membrane. Functionally, olfactory receptor activated by several primary trace amines, including isoamylamine. Activated by isoamylamine and cyclohexylamine, but not to the corresponding alcohols, isoamylalcohol and cyclohexanol. This receptor is probably mediated by the G(s)-class of G-proteins which activate adenylate cyclase. The chain is Trace amine-associated receptor 3 (Taar3) from Rattus norvegicus (Rat).